The chain runs to 193 residues: Probable nicotinate-nucleotide adenylyltransferase (193 aa).

It belongs to the NadD family.

The catalysed reaction is nicotinate beta-D-ribonucleotide + ATP + H(+) = deamido-NAD(+) + diphosphate. It functions in the pathway cofactor biosynthesis; NAD(+) biosynthesis; deamido-NAD(+) from nicotinate D-ribonucleotide: step 1/1. Its function is as follows. Catalyzes the reversible adenylation of nicotinate mononucleotide (NaMN) to nicotinic acid adenine dinucleotide (NaAD). In Coprothermobacter proteolyticus (strain ATCC 35245 / DSM 5265 / OCM 4 / BT), this protein is Probable nicotinate-nucleotide adenylyltransferase.